A 100-amino-acid polypeptide reads, in one-letter code: Co-chaperonin GroES (100 aa).

It belongs to the GroES chaperonin family. As to quaternary structure, heptamer of 7 subunits arranged in a ring. Interacts with the chaperonin GroEL.

The protein localises to the cytoplasm. Together with the chaperonin GroEL, plays an essential role in assisting protein folding. The GroEL-GroES system forms a nano-cage that allows encapsulation of the non-native substrate proteins and provides a physical environment optimized to promote and accelerate protein folding. GroES binds to the apical surface of the GroEL ring, thereby capping the opening of the GroEL channel. This Mycolicibacterium smegmatis (strain ATCC 700084 / mc(2)155) (Mycobacterium smegmatis) protein is Co-chaperonin GroES.